The following is a 300-amino-acid chain: MHTTDTETFEEQFAIEQRLVDSVVASFDSTTDPRLKELMQSLTRHLHAFIREVRLSEDEWSNAIAFLTAVGNITDDRRQEFILLSDVLGVSMQTIAVSNPAYEDATESTVFGPFFVEDAPEVTLGGDIAGGATGQPCWIEGTVTDTAGNPVPEARIEVWQNDEDGFYDVQYSDGRVSGRAHLFSDAHGRYRFWGMTPVPYPIPSDGPVGKMLAATNRSPMRVAHLHFMVTADGLRTLVTHIFVAGDPQLERGDSVFGVKDSLIKDFVEQPPGTPTPDGRHIGDRNWARCEFDIVLAPEQI.

Residues Tyr167, Tyr200, His224, and His226 each contribute to the Fe cation site.

Belongs to the intradiol ring-cleavage dioxygenase family. Fe(3+) is required as a cofactor.

The enzyme catalyses benzene-1,2,4-triol + O2 = maleylacetate + 2 H(+). The protein operates within aromatic compound metabolism. It functions in the pathway xenobiotic degradation. In terms of biological role, involved in the degradation of para-nitrophenol (4-NP). Catalyzes the conversion of hydroxyquinol to malelylacetate. This Rhodococcus opacus (Nocardia opaca) protein is Hydroxyquinol 1,2-dioxygenase (npcC).